The following is a 351-amino-acid chain: Outer membrane porin PhoE (351 aa).

The signal sequence occupies residues 1–21 (MKKSTLALVVMGIVASASVQA).

It belongs to the Gram-negative porin family. Homotrimer. Forms mixed heterotrimers with OmpC and with OmpF; other mixed heterotrimers are also probable.

Its subcellular location is the cell outer membrane. In terms of biological role, uptake of inorganic phosphate, phosphorylated compounds, and some other negatively charged solutes. The polypeptide is Outer membrane porin PhoE (phoE) (Escherichia coli (strain K12)).